The chain runs to 279 residues: Replication protein A 32 kDa subunit A (279 aa).

Positions 1–33 (MFSSSQFEPNSGFSGGGFMSSQPSQAYESSSST) are disordered. The segment covering 19-32 (MSSQPSQAYESSSS) has biased composition (low complexity). Positions 73–148 (VSLVGLVCDK…QLLVFSVRPI (76 aa)) form a DNA-binding region, OB.

Belongs to the replication factor A protein 2 family. In terms of assembly, heterotrimer of RPA1, RPA2 and RPA3 (canonical replication protein A complex). Interacts with ROS1. Binds to ASE1/At3g02920, PDX2, At5g62350, RPA1A/At2g06510, ARF1/At1g10630, At4g18590 and At3g52630. Phosphorylated in a cell-cycle-dependent manner (from the S phase until mitosis). In response to DNA damage, recruited to DNA-repair nuclear foci, as a hypophosphorylated form. As to expression, strongly expressed in shoot and root meristems. Present in seedlings, roots, leaves, siliques and flowers.

It is found in the nucleus. Component of the replication protein A complex (RPA) required for DNA recombination, repair and replication. The activity of RPA is mediated by single-stranded DNA binding and protein interactions. Required fo cell division in meristems. Involved in the maintenance of transcriptional epigenetic gene silencing (TGS) at specific loci (including some transposons) by regulating histone H3 acetylation, 'Lys-4' and 'Lys-9' methylation. The chain is Replication protein A 32 kDa subunit A (RPA2A) from Arabidopsis thaliana (Mouse-ear cress).